We begin with the raw amino-acid sequence, 471 residues long: Glutamate--tRNA ligase (471 aa).

Positions 9-19 (PSPTGFLHVGG) match the 'HIGH' region motif. 4 residues coordinate Zn(2+): cysteine 98, cysteine 100, cysteine 125, and aspartate 127. The 'KMSKS' region signature appears at 237–241 (KLSKR). Lysine 240 lines the ATP pocket.

Belongs to the class-I aminoacyl-tRNA synthetase family. Glutamate--tRNA ligase type 1 subfamily. In terms of assembly, monomer. The cofactor is Zn(2+).

It is found in the cytoplasm. It catalyses the reaction tRNA(Glu) + L-glutamate + ATP = L-glutamyl-tRNA(Glu) + AMP + diphosphate. In terms of biological role, catalyzes the attachment of glutamate to tRNA(Glu) in a two-step reaction: glutamate is first activated by ATP to form Glu-AMP and then transferred to the acceptor end of tRNA(Glu). In Aeromonas salmonicida (strain A449), this protein is Glutamate--tRNA ligase.